The following is a 250-amino-acid chain: Probable fimbrial chaperone YfcS (250 aa).

Positions 1–28 are cleaved as a signal peptide; that stretch reads MSDLLCSAKLGAMTLALLLSATSLSALA.

Belongs to the periplasmic pilus chaperone family.

It is found in the periplasm. Its function is as follows. Part of the yfcOPQRSUV fimbrial operon. Could contribute to adhesion to various surfaces in specific environmental niches. Increases adhesion to eukaryotic T24 bladder epithelial cells in the absence of fim genes. This chain is Probable fimbrial chaperone YfcS (yfcS), found in Escherichia coli (strain K12).